The following is a 382-amino-acid chain: Queuine tRNA-ribosyltransferase (382 aa).

Asp89 acts as the Proton acceptor in catalysis. Substrate-binding positions include 89-93 (DSGGF), Asp143, Gln187, and Gly214. Residues 245 to 251 (GVGKPED) form an RNA binding region. The active-site Nucleophile is the Asp264. Residues 269 to 273 (TRNAR) form an RNA binding; important for wobble base 34 recognition region. Positions 302, 304, 307, and 333 each coordinate Zn(2+).

It belongs to the queuine tRNA-ribosyltransferase family. Homodimer. Within each dimer, one monomer is responsible for RNA recognition and catalysis, while the other monomer binds to the replacement base PreQ1. It depends on Zn(2+) as a cofactor.

The enzyme catalyses 7-aminomethyl-7-carbaguanine + guanosine(34) in tRNA = 7-aminomethyl-7-carbaguanosine(34) in tRNA + guanine. Its pathway is tRNA modification; tRNA-queuosine biosynthesis. In terms of biological role, catalyzes the base-exchange of a guanine (G) residue with the queuine precursor 7-aminomethyl-7-deazaguanine (PreQ1) at position 34 (anticodon wobble position) in tRNAs with GU(N) anticodons (tRNA-Asp, -Asn, -His and -Tyr). Catalysis occurs through a double-displacement mechanism. The nucleophile active site attacks the C1' of nucleotide 34 to detach the guanine base from the RNA, forming a covalent enzyme-RNA intermediate. The proton acceptor active site deprotonates the incoming PreQ1, allowing a nucleophilic attack on the C1' of the ribose to form the product. After dissociation, two additional enzymatic reactions on the tRNA convert PreQ1 to queuine (Q), resulting in the hypermodified nucleoside queuosine (7-(((4,5-cis-dihydroxy-2-cyclopenten-1-yl)amino)methyl)-7-deazaguanosine). This Sodalis glossinidius (strain morsitans) protein is Queuine tRNA-ribosyltransferase.